A 316-amino-acid polypeptide reads, in one-letter code: Carbamate kinase-like protein YahI (316 aa).

The protein belongs to the carbamate kinase family.

The polypeptide is Carbamate kinase-like protein YahI (yahI) (Escherichia coli (strain K12)).